The primary structure comprises 132 residues: Transmembrane protein 170B (132 aa).

The Extracellular portion of the chain corresponds to 1–37; it reads MRAEGADHSMINLSVQQVLSLWAHGTVLRNLTEMWYW. N-linked (GlcNAc...) asparagine glycosylation is present at Asn12. The chain crosses the membrane as a helical span at residues 38-58; the sequence is IFLWALFSSLFVHGAAGVLMF. Over 59-68 the chain is Cytoplasmic; sequence VMLQRHRQGR. The chain crosses the membrane as a helical span at residues 69 to 89; the sequence is VLSIIAVSIGFLASVTGAMIT. Residues 90–104 lie on the Extracellular side of the membrane; that stretch reads SAAVAGIYRVAGKNM. Residues 105 to 125 form a helical membrane-spanning segment; the sequence is APLEALVWGVGQTVLTLIISF. Residues 126–132 lie on the Cytoplasmic side of the membrane; sequence SRILATL.

It belongs to the TMEM170 family. Interacts with CTNNB1.

Its subcellular location is the cell membrane. This is Transmembrane protein 170B (Tmem170b) from Rattus norvegicus (Rat).